A 476-amino-acid chain; its full sequence is Ribulose bisphosphate carboxylase large chain (476 aa).

The propeptide occupies Met1–Ser2. Pro3 carries the N-acetylproline modification. Lys14 carries the post-translational modification N6,N6,N6-trimethyllysine. Substrate is bound by residues Asn123 and Thr173. The active-site Proton acceptor is the Lys175. Lys177 contacts substrate. Lys201, Asp203, and Glu204 together coordinate Mg(2+). At Lys201 the chain carries N6-carboxylysine. The Proton acceptor role is filled by His294. Substrate contacts are provided by Arg295, His327, and Ser379.

It belongs to the RuBisCO large chain family. Type I subfamily. Heterohexadecamer of 8 large chains and 8 small chains; disulfide-linked. The disulfide link is formed within the large subunit homodimers. Requires Mg(2+) as cofactor. Post-translationally, the disulfide bond which can form in the large chain dimeric partners within the hexadecamer appears to be associated with oxidative stress and protein turnover.

It localises to the plastid. The protein resides in the chloroplast. The enzyme catalyses 2 (2R)-3-phosphoglycerate + 2 H(+) = D-ribulose 1,5-bisphosphate + CO2 + H2O. It catalyses the reaction D-ribulose 1,5-bisphosphate + O2 = 2-phosphoglycolate + (2R)-3-phosphoglycerate + 2 H(+). Functionally, ruBisCO catalyzes two reactions: the carboxylation of D-ribulose 1,5-bisphosphate, the primary event in carbon dioxide fixation, as well as the oxidative fragmentation of the pentose substrate in the photorespiration process. Both reactions occur simultaneously and in competition at the same active site. This is Ribulose bisphosphate carboxylase large chain from Arenaria drummondii (Drummond sandwort).